We begin with the raw amino-acid sequence, 346 residues long: Ribosomal RNA small subunit methyltransferase H (346 aa).

S-adenosyl-L-methionine is bound by residues 46 to 48, D63, F90, D113, and Q120; that span reads GGY. Residues 270 to 346 are disordered; that stretch reads GGSAGSRHMP…LPETNELARS (77 aa).

The protein belongs to the methyltransferase superfamily. RsmH family.

The protein localises to the cytoplasm. It catalyses the reaction cytidine(1402) in 16S rRNA + S-adenosyl-L-methionine = N(4)-methylcytidine(1402) in 16S rRNA + S-adenosyl-L-homocysteine + H(+). Its function is as follows. Specifically methylates the N4 position of cytidine in position 1402 (C1402) of 16S rRNA. This Brucella suis (strain ATCC 23445 / NCTC 10510) protein is Ribosomal RNA small subunit methyltransferase H.